The following is a 434-amino-acid chain: Probable G-protein coupled receptor 150 (434 aa).

Residues 1 to 3 are Extracellular-facing; the sequence is MED. Residues 4–24 form a helical membrane-spanning segment; sequence LFSPSILPPAPNISVPILLGW. Over 25 to 43 the chain is Cytoplasmic; the sequence is GLNLTLGQGAPASGPPSRR. Residues 44-64 form a helical membrane-spanning segment; it reads VRLVFLGVILVVAVAGNTTVL. The Extracellular portion of the chain corresponds to 65-81; sequence CRLCGGGGPWAGPKRRK. The helical transmembrane segment at 82–102 threads the bilayer; it reads MDFLLVQLALADLYACGGTAL. At 103 to 162 the chain is on the cytoplasmic side; sequence SQLAWELLGEPRAATGDLACRFLQLLQASGRGASAHLVVLIALERRRAVRLPHGRPLPAR. Residues 163-183 traverse the membrane as a helical segment; sequence ALAALGWLLALLLALPPAFVV. The Extracellular segment spans residues 184-237; it reads RGDSPSPLPPPPPPTSLQPGAPPAARAWPGERRCHGIFAPLPRWHLQVYAFYEA. The tract at residues 188–210 is disordered; it reads PSPLPPPPPPTSLQPGAPPAARA. A compositionally biased stretch (pro residues) spans 189–205; it reads SPLPPPPPPTSLQPGAP. Residues 238-258 form a helical membrane-spanning segment; that stretch reads VAGFVAPVTVLGVACGHLLSV. Topologically, residues 259-293 are cytoplasmic; it reads WWRHRPQAPAAAAPWSASPGRAPAPSALPRAKVQS. Residues 294 to 314 form a helical membrane-spanning segment; that stretch reads LKMSLLLALLFVGCELPYFAA. At 315-334 the chain is on the extracellular side; sequence RLAAAWSSGPAGDWEGEGLS. A helical transmembrane segment spans residues 335-355; that stretch reads AALRVVAMANSALNPFVYLFF. The Cytoplasmic portion of the chain corresponds to 356-434; the sequence is QAGDCRLRRQ…PLPCSCESAF (79 aa). Residues 398 to 407 show a composition bias toward basic residues; the sequence is WPHPHYHHAR. The disordered stretch occupies residues 398-434; that stretch reads WPHPHYHHARREPLDEGGLRPPPPRPRPLPCSCESAF. Over residues 417–426 the composition is skewed to pro residues; that stretch reads RPPPPRPRPL.

It belongs to the G-protein coupled receptor 1 family.

The protein localises to the cell membrane. Its function is as follows. Orphan receptor. The protein is Probable G-protein coupled receptor 150 (GPR150) of Homo sapiens (Human).